The primary structure comprises 290 residues: Serpentine receptor class U-26 (290 aa).

7 helical membrane-spanning segments follow: residues 31-51, 70-90, 112-134, 158-178, 185-205, 213-233, and 262-282; these read LPML…IIIL, LLSA…ADFL, FITI…PFLV, FSIP…FPAI, AYPF…FGLV, NTLF…LLLI, and MIFS…LHIV.

The protein belongs to the nematode receptor-like protein sru family.

It is found in the membrane. The polypeptide is Serpentine receptor class U-26 (sru-26) (Caenorhabditis elegans).